Consider the following 445-residue polypeptide: ATPase PAAT (445 aa).

Serine 177, serine 182, serine 254, and serine 302 each carry phosphoserine. The interval 426–445 (PTGIPLRHYDSGERLSNGER) is disordered. Residues 432 to 445 (RHYDSGERLSNGER) are compositionally biased toward basic and acidic residues.

Homodimer. Interacts with ABCB7, ABCB8/MITOSUR and ABCB10.

The protein localises to the cytoplasm. Its subcellular location is the mitochondrion. The enzyme catalyses ATP + H2O = ADP + phosphate + H(+). ATPase that regulates mitochondrial ABC transporters ABCB7, ABCB8/MITOSUR and ABCB10. Regulates mitochondrial ferric concentration and heme biosynthesis and plays a role in the maintenance of mitochondrial homeostasis and cell survival. This is ATPase PAAT from Homo sapiens (Human).